A 65-amino-acid chain; its full sequence is SPbeta prophage-derived uncharacterized protein YopU (65 aa).

This is SPbeta prophage-derived uncharacterized protein YopU (yopU) from Bacillus subtilis (strain 168).